The sequence spans 725 residues: Polyribonucleotide nucleotidyltransferase (725 aa).

Residues Asp487 and Asp493 each contribute to the Mg(2+) site. The region spanning 554 to 613 (PRIETMQIPTDKIREVIGTGGKVIREIVEKTGAKIDIQDTGVIKIASSDAKAIKAAYNWI) is the KH domain. The S1 motif domain maps to 623–691 (GMIYDGTVVK…ERGKIRLSMK (69 aa)). Residues 697–725 (TGEDITEKLKAEREADRNRERQARQSAGE) form a disordered region. Positions 701 to 719 (ITEKLKAEREADRNRERQA) are enriched in basic and acidic residues.

The protein belongs to the polyribonucleotide nucleotidyltransferase family. The cofactor is Mg(2+).

Its subcellular location is the cytoplasm. It carries out the reaction RNA(n+1) + phosphate = RNA(n) + a ribonucleoside 5'-diphosphate. Involved in mRNA degradation. Catalyzes the phosphorolysis of single-stranded polyribonucleotides processively in the 3'- to 5'-direction. The chain is Polyribonucleotide nucleotidyltransferase from Methylobacterium nodulans (strain LMG 21967 / CNCM I-2342 / ORS 2060).